A 102-amino-acid polypeptide reads, in one-letter code: Small ribosomal subunit protein uS10 (102 aa).

This sequence belongs to the universal ribosomal protein uS10 family. Part of the 30S ribosomal subunit.

In terms of biological role, involved in the binding of tRNA to the ribosomes. The sequence is that of Small ribosomal subunit protein uS10 from Geobacillus kaustophilus (strain HTA426).